The following is an 827-amino-acid chain: Transcription factor SOX-6 (827 aa).

The segment covering 1–10 (MSSKQATSPF) has biased composition (polar residues). Positions 1-51 (MSSKQATSPFACTVDGEETMTQDLTSREKEEGSDQHPASHLPLHPIMHNKP) are disordered. The span at 25–34 (TSREKEEGSD) shows a compositional bias: basic and acidic residues. Residue T119 is modified to Phosphothreonine. Residues 184-257 (LAEKERQLST…QHKINLLQQQ (74 aa)) adopt a coiled-coil conformation. Disordered regions lie at residues 329-360 (HVSHPQINPRLKGISDRLGRNLDPYEHGGGHS) and 380-470 (SPGA…PIGG). A compositionally biased stretch (basic and acidic residues) spans 341 to 357 (GISDRLGRNLDPYEHGG). Phosphoserine is present on S399. Residue T401 is modified to Phosphothreonine. Residues K404 and K417 each participate in a glycyl lysine isopeptide (Lys-Gly) (interchain with G-Cter in SUMO) cross-link. 2 stretches are compositionally biased toward polar residues: residues 421–431 (TAQPLNLSSRP) and 439–461 (SPTSPTQSLFPASKTSPVNLPNK). Phosphoserine is present on residues S439 and S442. A DNA-binding region (HMG box) is located at residues 620 to 688 (IKRPMNAFMV…IHLEKYPNYK (69 aa)). 2 disordered regions span residues 752 to 772 (TPSPQMTSDCSSTSASPEPSL) and 786 to 827 (ASLA…VSAN). Acidic residues predominate over residues 795–808 (NGEDEMEAYDDYED).

As to quaternary structure, homodimer. Interacts with DAZAP2. May interact with CENPK. In terms of processing, sumoylation inhibits the transcriptional activity.

It is found in the nucleus. Its subcellular location is the cytoplasm. Its function is as follows. Transcription factor that plays a key role in several developmental processes, including neurogenesis, chondrocytes differentiation and cartilage formation. Specifically binds the 5'-AACAAT-3' DNA motif present in enhancers and super-enhancers and promotes expression of genes important for chondrogenesis. Required for overt chondrogenesis when condensed prechondrocytes differentiate into early stage chondrocytes: SOX5 and SOX6 cooperatively bind with SOX9 on active enhancers and super-enhancers associated with cartilage-specific genes, and thereby potentiate SOX9's ability to transactivate. Not involved in precartilaginous condensation, the first step in chondrogenesis, during which skeletal progenitors differentiate into prechondrocytes. Together with SOX5, required to form and maintain a pool of highly proliferating chondroblasts between epiphyses and metaphyses, to form columnar chondroblasts, delay chondrocyte prehypertrophy but promote hypertrophy, and to delay terminal differentiation of chondrocytes on contact with ossification fronts. Binds to the proximal promoter region of the myelin protein MPZ gene, and is thereby involved in the differentiation of oligodendroglia in the developing spinal tube. Binds to the gene promoter of MBP and acts as a transcriptional repressor. This chain is Transcription factor SOX-6, found in Rattus norvegicus (Rat).